The primary structure comprises 257 residues: UPF0246 protein Daro_2893 (257 aa).

Belongs to the UPF0246 family.

This chain is UPF0246 protein Daro_2893, found in Dechloromonas aromatica (strain RCB).